The following is a 192-amino-acid chain: Phosphoheptose isomerase (192 aa).

An SIS domain is found at 36-192; it reads CVDSLAAGGK…DQVEAVAAPA (157 aa). A substrate-binding site is contributed by 51 to 53; it reads NGG. Zn(2+)-binding residues include histidine 60 and glutamate 64. Residues glutamate 64, 93-94, 119-121, serine 124, and glutamine 171 contribute to the substrate site; these read ND and TTS. Glutamine 171 and histidine 179 together coordinate Zn(2+).

Belongs to the SIS family. GmhA subfamily. As to quaternary structure, homotetramer. Zn(2+) serves as cofactor.

The protein resides in the cytoplasm. It carries out the reaction 2 D-sedoheptulose 7-phosphate = D-glycero-alpha-D-manno-heptose 7-phosphate + D-glycero-beta-D-manno-heptose 7-phosphate. The protein operates within carbohydrate biosynthesis; D-glycero-D-manno-heptose 7-phosphate biosynthesis; D-glycero-alpha-D-manno-heptose 7-phosphate and D-glycero-beta-D-manno-heptose 7-phosphate from sedoheptulose 7-phosphate: step 1/1. Its function is as follows. Catalyzes the isomerization of sedoheptulose 7-phosphate in D-glycero-D-manno-heptose 7-phosphate. This Paramagnetospirillum magneticum (strain ATCC 700264 / AMB-1) (Magnetospirillum magneticum) protein is Phosphoheptose isomerase.